A 160-amino-acid chain; its full sequence is Transcription antitermination protein NusB (160 aa).

The protein belongs to the NusB family.

Involved in transcription antitermination. Required for transcription of ribosomal RNA (rRNA) genes. Binds specifically to the boxA antiterminator sequence of the ribosomal RNA (rrn) operons. The chain is Transcription antitermination protein NusB from Sinorhizobium fredii (strain NBRC 101917 / NGR234).